The primary structure comprises 625 residues: 1-deoxy-D-xylulose-5-phosphate synthase (625 aa).

Residues histidine 80 and 121–123 (GHS) each bind thiamine diphosphate. Aspartate 152 lines the Mg(2+) pocket. Thiamine diphosphate is bound by residues 153-154 (GA), asparagine 181, tyrosine 288, and glutamate 370. Asparagine 181 lines the Mg(2+) pocket.

It belongs to the transketolase family. DXPS subfamily. Homodimer. Requires Mg(2+) as cofactor. It depends on thiamine diphosphate as a cofactor.

The enzyme catalyses D-glyceraldehyde 3-phosphate + pyruvate + H(+) = 1-deoxy-D-xylulose 5-phosphate + CO2. Its pathway is metabolic intermediate biosynthesis; 1-deoxy-D-xylulose 5-phosphate biosynthesis; 1-deoxy-D-xylulose 5-phosphate from D-glyceraldehyde 3-phosphate and pyruvate: step 1/1. In terms of biological role, catalyzes the acyloin condensation reaction between C atoms 2 and 3 of pyruvate and glyceraldehyde 3-phosphate to yield 1-deoxy-D-xylulose-5-phosphate (DXP). In Alteromonas mediterranea (strain DSM 17117 / CIP 110805 / LMG 28347 / Deep ecotype), this protein is 1-deoxy-D-xylulose-5-phosphate synthase.